The following is a 286-amino-acid chain: uncharacterized protein (286 aa).

The segment at 152–182 (YPSTTTSVTPGKKGEKTTKVDGFSSPLNQDT) is disordered. A helical membrane pass occupies residues 198 to 218 (VLIAVTLFVSGIAITVFVIFE). The tract at residues 239–278 (RRPRKEDQQPGTAESQSDTQPKKVGQEAPNSSSPKKAVEI) is disordered. Residues 247-257 (QPGTAESQSDT) show a composition bias toward polar residues.

The protein localises to the membrane. This is an uncharacterized protein from Bos taurus (Bovine).